The following is a 185-amino-acid chain: Dihydrofolate reductase (185 aa).

A DHFR domain is found at 5-184; the sequence is KLNLIAAACD…ISYYFRVYKK (180 aa). NADP(+)-binding positions include Ala-11 and 17–23; that span reads GIGVNGA. 31 to 36 is a binding site for substrate; sequence EMAYFT. 55–57 provides a ligand contact to NADP(+); it reads RRT. Arg-71 contacts substrate. Residues 77–79 and 117–124 each bind NADP(+); these read THN and GGSSIYRA.

The protein belongs to the dihydrofolate reductase family.

It carries out the reaction (6S)-5,6,7,8-tetrahydrofolate + NADP(+) = 7,8-dihydrofolate + NADPH + H(+). It participates in cofactor biosynthesis; tetrahydrofolate biosynthesis; 5,6,7,8-tetrahydrofolate from 7,8-dihydrofolate: step 1/1. Its activity is regulated as follows. Activated by dithiothreitol and p-chloromercuribenzoate. Inhibited by trimethoprim, methotrexate, sodium tetrathionate and hydroxymercuribenzoate. Functionally, key enzyme in folate metabolism. Catalyzes an essential reaction for de novo glycine and purine synthesis, and for DNA precursor synthesis. This chain is Dihydrofolate reductase (DHFR), found in Heliothis virescens (Tobacco budworm moth).